An 85-amino-acid chain; its full sequence is Large ribosomal subunit protein bL27 (85 aa).

Residues 1-20 form a disordered region; the sequence is MAHKKAGGSTRNGRDSEAKR.

This sequence belongs to the bacterial ribosomal protein bL27 family.

The sequence is that of Large ribosomal subunit protein bL27 from Salmonella agona (strain SL483).